We begin with the raw amino-acid sequence, 424 residues long: MAQYIKQGKSESELKDSHGKVEQTVASLIARIEKEGETAVRELSRQFDNWDPEQFRLSAEEIEKIVRSVPDQVKADICFAQEQIRHFAEQQRASIQDIEVETRPGVFLGHKNIPVNSVGCYIPGGRYPMVASSHMSILTAKVAGVKRVIGCTPPINGEIPAATVTAMHFAGADEIYILGGVQAMTAMAVGTETIEAVDMLVGPGNAFVAEAKRQLFGRVGIDLFAGPTEVLIIADDTADGEMVATDLLGQAEHGPTSPAALITTSKKLAEETVAEIERQLQTLPTADVAKVAWEEHGMIILVDDLAEAVVEADKLAYEHVQVLTENPNYFLDHMTNYGALFLGPETNVAYGDKVIGTNHTLPTKKAAKYTGGLWVGKFLKNCTYQRCTPEASAEIGRIAERLCELEGFIGHKAQASLRVKRYGK.

The Zn(2+) site is built by Gln250 and His253. Active-site proton acceptor residues include Glu318 and His319. The Zn(2+) site is built by Asp352 and His411.

It belongs to the histidinol dehydrogenase family. Zn(2+) serves as cofactor.

This chain is Histidinol dehydrogenase homolog, found in Shouchella clausii (strain KSM-K16) (Alkalihalobacillus clausii).